Reading from the N-terminus, the 1240-residue chain is ABC transporter B family member 15 (1240 aa).

6 helical membrane-spanning segments follow: residues 35 to 55, 82 to 102, 158 to 180, 184 to 206, 264 to 284, and 296 to 316; these read MGLG…VLLI, VALL…GYCW, LPNF…ILLW, IVGL…ALIS, GITI…SWYG, and GTVF…GGGL. The 290-residue stretch at 35 to 324 folds into the ABC transmembrane type-1 1 domain; it reads MGLGLIGAVG…GLSNLKYFFE (290 aa). An ABC transporter 1 domain is found at 359 to 595; that stretch reads VEFKNVKFVY…IDGQYSTLVH (237 aa). 394–401 is an ATP binding site; it reads GGSGSGKS. 3 N-linked (GlcNAc...) asparagine glycosylation sites follow: Asn542, Asn605, and Asn622. The tract at residues 617–646 is disordered; the sequence is SKDIRNSSRVSTLSRSSSANSVTGPSTIKN. Positions 623 to 639 are enriched in low complexity; sequence SSRVSTLSRSSSANSVT. Asn646 carries N-linked (GlcNAc...) asparagine glycosylation. The ABC transmembrane type-1 2 domain occupies 672–960; that stretch reads ALYGCISATL…AGSMTTDLAK (289 aa). 2 helical membrane passes run 681–701 and 714–734; these read LFGA…SVYF and IYAL…ISQH. Residue Asn769 is glycosylated (N-linked (GlcNAc...) asparagine). The next 4 membrane-spanning stretches (helical) occupy residues 794–813, 817–839, 895–915, and 923–943; these read ALVV…GLVI, LALV…RVLL, SWFA…TWAL, and LIQD…ILVS. The ABC transporter 2 domain occupies 995–1233; sequence VEFLDVDFSY…GPTGIYFSLV (239 aa). Residue Asn1015 is glycosylated (N-linked (GlcNAc...) asparagine). ATP is bound at residue 1030-1037; sequence GPSGSGKS.

Belongs to the ABC transporter superfamily. ABCB family. Multidrug resistance exporter (TC 3.A.1.201) subfamily.

It localises to the membrane. This Arabidopsis thaliana (Mouse-ear cress) protein is ABC transporter B family member 15 (ABCB15).